Here is a 259-residue protein sequence, read N- to C-terminus: Thiazole synthase (259 aa).

Lysine 95 functions as the Schiff-base intermediate with DXP in the catalytic mechanism. Residues glycine 156, 182–183 (AG), and 204–205 (AS) each bind 1-deoxy-D-xylulose 5-phosphate.

The protein belongs to the ThiG family. Homotetramer. Forms heterodimers with either ThiH or ThiS.

The protein resides in the cytoplasm. It carries out the reaction [ThiS sulfur-carrier protein]-C-terminal-Gly-aminoethanethioate + 2-iminoacetate + 1-deoxy-D-xylulose 5-phosphate = [ThiS sulfur-carrier protein]-C-terminal Gly-Gly + 2-[(2R,5Z)-2-carboxy-4-methylthiazol-5(2H)-ylidene]ethyl phosphate + 2 H2O + H(+). The protein operates within cofactor biosynthesis; thiamine diphosphate biosynthesis. Functionally, catalyzes the rearrangement of 1-deoxy-D-xylulose 5-phosphate (DXP) to produce the thiazole phosphate moiety of thiamine. Sulfur is provided by the thiocarboxylate moiety of the carrier protein ThiS. In vitro, sulfur can be provided by H(2)S. This is Thiazole synthase from Corynebacterium efficiens (strain DSM 44549 / YS-314 / AJ 12310 / JCM 11189 / NBRC 100395).